A 286-amino-acid polypeptide reads, in one-letter code: ATP synthase gamma chain (286 aa).

It belongs to the ATPase gamma chain family. As to quaternary structure, F-type ATPases have 2 components, CF(1) - the catalytic core - and CF(0) - the membrane proton channel. CF(1) has five subunits: alpha(3), beta(3), gamma(1), delta(1), epsilon(1). CF(0) has three main subunits: a, b and c.

Its subcellular location is the cell inner membrane. Produces ATP from ADP in the presence of a proton gradient across the membrane. The gamma chain is believed to be important in regulating ATPase activity and the flow of protons through the CF(0) complex. The chain is ATP synthase gamma chain from Shewanella amazonensis (strain ATCC BAA-1098 / SB2B).